The primary structure comprises 194 residues: Peptide deformylase (194 aa).

Cys105 and His147 together coordinate Fe cation. Residue Glu148 is part of the active site. His151 is a binding site for Fe cation.

This sequence belongs to the polypeptide deformylase family. The cofactor is Fe(2+).

The enzyme catalyses N-terminal N-formyl-L-methionyl-[peptide] + H2O = N-terminal L-methionyl-[peptide] + formate. Functionally, removes the formyl group from the N-terminal Met of newly synthesized proteins. Requires at least a dipeptide for an efficient rate of reaction. N-terminal L-methionine is a prerequisite for activity but the enzyme has broad specificity at other positions. This Flavobacterium psychrophilum (strain ATCC 49511 / DSM 21280 / CIP 103535 / JIP02/86) protein is Peptide deformylase.